A 345-amino-acid polypeptide reads, in one-letter code: MARQINDTFLRACRGEQTSYVPVWYMRQAGRSQPEYRALKEKYSLFEITHQPELCAYVTRLPVEQYGVDAAILYKDIMTPLPAIGVNVEIQGGIGPVIANPIRSLQDVERLGEIDPEHDVPYVFETIRLLVNEQLDVPLIGFAGAPFTLASYMIEGGPSKNYHKTKAFMYAEPKAWFALMDKLAEMTIRYVRAQIRAGASAVQIFDSWVGAVSADDYRTFIKPAMARIFAALREEGAPLIMFGVGASHLVHEWNDLPLDVIGLDWRLSIREARRQGIAKAIQGNLDPAVLLAPWDVIEERVKRILDEGMERPGYIFNLGHGIFPDVQPATLKRLTAFIHEYTSTN.

Substrate contacts are provided by residues 27–31 (RQAGR), F46, D76, Y152, S207, and H320.

It belongs to the uroporphyrinogen decarboxylase family. As to quaternary structure, homodimer.

The protein resides in the cytoplasm. It carries out the reaction uroporphyrinogen III + 4 H(+) = coproporphyrinogen III + 4 CO2. It participates in porphyrin-containing compound metabolism; protoporphyrin-IX biosynthesis; coproporphyrinogen-III from 5-aminolevulinate: step 4/4. Functionally, catalyzes the decarboxylation of four acetate groups of uroporphyrinogen-III to yield coproporphyrinogen-III. The sequence is that of Uroporphyrinogen decarboxylase from Geobacillus kaustophilus (strain HTA426).